Consider the following 289-residue polypeptide: Inorganic pyrophosphatase (289 aa).

At S2 the chain carries N-acetylserine. The residue at position 57 (K57) is an N6-acetyllysine. Residues D116, D121, and D153 each contribute to the Mg(2+) site. The residue at position 228 (K228) is an N6-acetyllysine. S250 carries the phosphoserine modification.

Belongs to the PPase family. Homodimer. Mg(2+) serves as cofactor.

It is found in the cytoplasm. The enzyme catalyses diphosphate + H2O = 2 phosphate + H(+). In Mus musculus (Mouse), this protein is Inorganic pyrophosphatase (Ppa1).